Reading from the N-terminus, the 833-residue chain is Leucine--tRNA ligase (833 aa).

Residues 41–52 carry the 'HIGH' region motif; sequence PYPSGAGLHVGH. The short motif at 610 to 614 is the 'KMSKS' region element; that stretch reads KMSKS. Position 613 (Lys613) interacts with ATP.

Belongs to the class-I aminoacyl-tRNA synthetase family.

Its subcellular location is the cytoplasm. The catalysed reaction is tRNA(Leu) + L-leucine + ATP = L-leucyl-tRNA(Leu) + AMP + diphosphate. The polypeptide is Leucine--tRNA ligase (Streptococcus pyogenes serotype M2 (strain MGAS10270)).